The primary structure comprises 793 residues: uncharacterized protein (793 aa).

The N-terminal stretch at 1–21 is a signal peptide; that stretch reads MLKKTLLAYTIGFAFSPPANA. A disulfide bridge links cysteine 769 with cysteine 792.

Belongs to the fimbrial export usher family.

Its subcellular location is the cell outer membrane. Involved in the export and assembly of a fimbrial subunit across the outer membrane. This is an uncharacterized protein from Escherichia coli (strain K12).